The chain runs to 301 residues: Cell division control protein 2 homolog 1 (301 aa).

The region spanning 5–297 (YERLQKIGEG…AAQALEHPYF (293 aa)) is the Protein kinase domain. Residues 11 to 19 (IGEGSYGVV) and Lys34 each bind ATP. Ser15 is subject to Phosphoserine. At Tyr16 the chain carries Phosphotyrosine. The active-site Proton acceptor is the Asp127. Thr160 is subject to Phosphothreonine; by CAK.

It belongs to the protein kinase superfamily. CMGC Ser/Thr protein kinase family. CDC2/CDKX subfamily. Forms a stable but non-covalent complex with a regulatory subunit and with a cyclin.

The catalysed reaction is L-seryl-[protein] + ATP = O-phospho-L-seryl-[protein] + ADP + H(+). The enzyme catalyses L-threonyl-[protein] + ATP = O-phospho-L-threonyl-[protein] + ADP + H(+). Phosphorylation at Ser-15 or Tyr-16 inactivates the enzyme, while phosphorylation at Thr-160 activates it. Its function is as follows. Probably involved in the control of the cell cycle. In Trypanosoma brucei brucei, this protein is Cell division control protein 2 homolog 1 (CRK1).